We begin with the raw amino-acid sequence, 196 residues long: Vascular-related unknown protein 2 (196 aa).

Residues 84–130 (ANNINTNPKKRRIIHQHKEEEEEELQKGEEEEEDEEDTASSPSNKTK) are disordered. Positions 103 to 121 (EEEEELQKGEEEEEDEEDT) are enriched in acidic residues.

In terms of biological role, involved in the regulation of plant growth. This Arabidopsis thaliana (Mouse-ear cress) protein is Vascular-related unknown protein 2.